Consider the following 464-residue polypeptide: tRNA modification GTPase MnmE (464 aa).

(6S)-5-formyl-5,6,7,8-tetrahydrofolate contacts are provided by arginine 27, glutamate 89, and arginine 128. The TrmE-type G domain maps to 225–384; sequence GLATAIIGHP…LEDRIAAMFF (160 aa). Asparagine 235 contributes to the K(+) binding site. Residues 235–240, 254–260, and 279–282 contribute to the GTP site; these read NVGKSS, TDVAGTT, and DTAG. Serine 239 is a Mg(2+) binding site. K(+) contacts are provided by threonine 254, valine 256, and threonine 259. Threonine 260 contacts Mg(2+). Lysine 464 contacts (6S)-5-formyl-5,6,7,8-tetrahydrofolate.

The protein belongs to the TRAFAC class TrmE-Era-EngA-EngB-Septin-like GTPase superfamily. TrmE GTPase family. In terms of assembly, homodimer. Heterotetramer of two MnmE and two MnmG subunits. K(+) is required as a cofactor.

The protein resides in the cytoplasm. Exhibits a very high intrinsic GTPase hydrolysis rate. Involved in the addition of a carboxymethylaminomethyl (cmnm) group at the wobble position (U34) of certain tRNAs, forming tRNA-cmnm(5)s(2)U34. This Pediococcus pentosaceus (strain ATCC 25745 / CCUG 21536 / LMG 10740 / 183-1w) protein is tRNA modification GTPase MnmE.